Consider the following 398-residue polypeptide: Mitochondrial protein import protein mas5 (398 aa).

In terms of domain architecture, J spans 7–88; it reads GYYKVLELSP…KKKKEYDSGM (82 aa). A CR-type zinc finger spans residues 139–219; it reads GKVSKFNVRT…CNGAEYIQDK (81 aa). 144–146 contacts substrate; sequence FNV. Zn(2+) contacts are provided by Cys-152, Cys-155, Cys-166, Cys-169, Cys-192, Cys-195, Cys-207, and Cys-210. CXXCXGXG motif repeat units lie at residues 152–159, 166–173, 192–199, and 207–214; these read CTTCDGKG, CKKCNGNG, CDGCDGSG, and CSTCNGAE. Substrate is bound by residues 221–222 and 253–255; these read MF and VIF. A disordered region spans residues 367 to 386; it reads FGSMPEPERDHEDASEEGAQ.

It belongs to the DnaJ family. Homodimer. It depends on Zn(2+) as a cofactor.

Its subcellular location is the cytoplasm. Functionally, probably involved in mitosomal protein import. In Encephalitozoon cuniculi (strain GB-M1) (Microsporidian parasite), this protein is Mitochondrial protein import protein mas5 (MAS5).